A 696-amino-acid chain; its full sequence is Translation initiation factor IF-2 (696 aa).

In terms of domain architecture, tr-type G spans 187–361 (ERPPVVTVMG…EMQEIKGIPD (175 aa)). A G1 region spans residues 196–203 (GHVDHGKT). Residue 196–203 (GHVDHGKT) participates in GTP binding. The interval 221–225 (GITQS) is G2. The G3 stretch occupies residues 242–245 (DTPG). GTP contacts are provided by residues 242–246 (DTPGH) and 296–299 (NKID). The segment at 296-299 (NKID) is G4. The tract at residues 333 to 335 (SAK) is G5.

It belongs to the TRAFAC class translation factor GTPase superfamily. Classic translation factor GTPase family. IF-2 subfamily.

The protein resides in the cytoplasm. Its function is as follows. One of the essential components for the initiation of protein synthesis. Protects formylmethionyl-tRNA from spontaneous hydrolysis and promotes its binding to the 30S ribosomal subunits. Also involved in the hydrolysis of GTP during the formation of the 70S ribosomal complex. In Thermosipho africanus (strain TCF52B), this protein is Translation initiation factor IF-2.